We begin with the raw amino-acid sequence, 706 residues long: Fatty acid oxidation complex subunit alpha (706 aa).

The interval 1–188 (MEKTFNLTRR…KMGLVNDVVP (188 aa)) is enoyl-CoA hydratase. The segment at 308–706 (RKVKKAVILG…TMARENVSFF (399 aa)) is 3-hydroxyacyl-CoA dehydrogenase.

This sequence in the N-terminal section; belongs to the enoyl-CoA hydratase/isomerase family. The protein in the central section; belongs to the 3-hydroxyacyl-CoA dehydrogenase family. In terms of assembly, heterotetramer of two alpha chains (FadJ) and two beta chains (FadI).

The protein localises to the cytoplasm. It catalyses the reaction a (3S)-3-hydroxyacyl-CoA = a (2E)-enoyl-CoA + H2O. It carries out the reaction a 4-saturated-(3S)-3-hydroxyacyl-CoA = a (3E)-enoyl-CoA + H2O. The enzyme catalyses a (3S)-3-hydroxyacyl-CoA + NAD(+) = a 3-oxoacyl-CoA + NADH + H(+). The catalysed reaction is (3S)-3-hydroxybutanoyl-CoA = (3R)-3-hydroxybutanoyl-CoA. It participates in lipid metabolism; fatty acid beta-oxidation. Catalyzes the formation of a hydroxyacyl-CoA by addition of water on enoyl-CoA. Also exhibits 3-hydroxyacyl-CoA epimerase and 3-hydroxyacyl-CoA dehydrogenase activities. In Shewanella putrefaciens (strain CN-32 / ATCC BAA-453), this protein is Fatty acid oxidation complex subunit alpha.